Reading from the N-terminus, the 83-residue chain is Small ribosomal subunit protein eS21 (83 aa).

The protein belongs to the eukaryotic ribosomal protein eS21 family. Component of the 40S small ribosomal subunit. Interacts with sta.

It is found in the cytoplasm. The protein localises to the cytosol. The protein resides in the rough endoplasmic reticulum. Functionally, may be an associated component of the ribosome rather than a core structural subunit. May act as a translation initiation factor. Has a role in regulation of cell proliferation in the hematopoietic organs and the imaginal disks of larva. This is Small ribosomal subunit protein eS21 (RpS21) from Drosophila ananassae (Fruit fly).